The following is a 1049-amino-acid chain: Dyslexia-associated protein KIAA0319-like protein (1049 aa).

At 1–29 the chain is on the cytoplasmic side; that stretch reads MEKRLGVKPNPASWILSGYYWQTSAKWLR. The helical transmembrane segment at 30–50 threads the bilayer; that stretch reads SLYLFYTCFCFSVLWLSTDAS. Residues 49-127 form the MANSC domain; that stretch reads ASESRCQQGK…AFRTHSSNSM (79 aa). Over 51–932 the chain is Extracellular; it reads ESRCQQGKTQ…DSNCEWSVLY (882 aa). Residues Asn-247, Asn-395, Asn-472, Asn-487, and Asn-525 are each glycosylated (N-linked (GlcNAc...) asparagine). PKD domains are found at residues 312 to 401, 409 to 498, 504 to 594, 600 to 688, and 694 to 785; these read SAGE…VKPE, IAIV…VNKA, VANA…VQPE, QADA…VKEE, and IAKI…VKPD. Residues 933–953 traverse the membrane as a helical segment; the sequence is VIIATFVIVVALGILSWTVIC. Topologically, residues 954–1049 are cytoplasmic; it reads CCKRQKGKPK…KARSPREEIL (96 aa). Residue Thr-974 is modified to Phosphothreonine. 3 positions are modified to phosphoserine: Ser-978, Ser-1009, and Ser-1031. The tract at residues 1022-1049 is disordered; that stretch reads GKLLHGQNGSVPNGQTPLKARSPREEIL. Residues 1028–1037 show a composition bias toward polar residues; the sequence is QNGSVPNGQT. Thr-1037 carries the post-translational modification Phosphothreonine.

As to quaternary structure, interacts with RTN4R. In terms of assembly, (Microbial infection) Interacts with AAV-2 VP1. In terms of processing, N-glycosylated. In terms of tissue distribution, expressed in cortical neurons in the brain cortex (at protein level).

Its subcellular location is the cytoplasmic granule membrane. The protein resides in the golgi apparatus membrane. It localises to the golgi apparatus. It is found in the trans-Golgi network membrane. The protein localises to the cell membrane. Functionally, possible role in axon guidance through interaction with RTN4R. Its function is as follows. (Microbial infection) Acts as a receptor for adeno-associated virus and is involved in adeno-associated virus infection through endocytosis system. The protein is Dyslexia-associated protein KIAA0319-like protein of Homo sapiens (Human).